Reading from the N-terminus, the 121-residue chain is Ribulose bisphosphate carboxylase small subunit (121 aa).

The protein belongs to the RuBisCO small chain family. As to quaternary structure, heterohexadecamer of 8 large and 8 small subunits.

In terms of biological role, ruBisCO catalyzes two reactions: the carboxylation of D-ribulose 1,5-bisphosphate, the primary event in carbon dioxide fixation, as well as the oxidative fragmentation of the pentose substrate. Both reactions occur simultaneously and in competition at the same active site. Although the small subunit is not catalytic it is essential for maximal activity. The polypeptide is Ribulose bisphosphate carboxylase small subunit (Alvinoconcha hessleri symbiotic bacterium).